The following is a 119-amino-acid chain: Fluoride-specific ion channel FluC (119 aa).

4 consecutive transmembrane segments (helical) span residues 5-25, 30-50, 59-79, and 97-117; these read IIPLSIGAALGATARWLLNLA, IPPATGNLFANWIGAFLIGIF, WKLLLITGFLGSLTTLSGFSL, and IFLHTAGSLLLTWLGLKIGAA. Na(+) contacts are provided by Gly69 and Thr72.

It belongs to the fluoride channel Fluc/FEX (TC 1.A.43) family.

It is found in the cell inner membrane. It catalyses the reaction fluoride(in) = fluoride(out). Its activity is regulated as follows. Na(+) is not transported, but it plays an essential structural role and its presence is essential for fluoride channel function. Its function is as follows. Fluoride-specific ion channel. Important for reducing fluoride concentration in the cell, thus reducing its toxicity. The sequence is that of Fluoride-specific ion channel FluC from Neisseria meningitidis serogroup B (strain ATCC BAA-335 / MC58).